Consider the following 140-residue polypeptide: Heavy metal-associated isoprenylated plant protein 31 (140 aa).

The 65-residue stretch at 3 to 67 (MTVEIRVPNL…AVRRAGKAAE (65 aa)) folds into the HMA domain. Positions 14 and 17 each coordinate a metal cation. Position 137 is a cysteine methyl ester (Cys-137). A lipid anchor (S-farnesyl cysteine) is attached at Cys-137. A propeptide spans 138 to 140 (TIM) (removed in mature form).

This sequence belongs to the HIPP family.

Functionally, heavy-metal-binding protein. The polypeptide is Heavy metal-associated isoprenylated plant protein 31 (Arabidopsis thaliana (Mouse-ear cress)).